We begin with the raw amino-acid sequence, 424 residues long: UDP-sugar transporter protein SLC35A5 (424 aa).

At 1-8 the chain is on the cytoplasmic side; sequence MEKQCCSH. The helical transmembrane segment at 9–29 threads the bilayer; that stretch reads PVICSLSTMYTFLLGAIFIAL. The Lumenal segment spans residues 30-53; sequence SSSRILLVKYSANEENKYDYLPTT. Residues 54 to 74 form a helical membrane-spanning segment; that stretch reads VNVCSELVKLVFCVLVSFCVI. The Cytoplasmic portion of the chain corresponds to 75 to 93; the sequence is KKDHQSRNLKYASWKEFSD. A helical membrane pass occupies residues 94-116; the sequence is FMKWSIPAFLYFLDNLIVFYVLS. Residues 117–119 are Lumenal-facing; sequence YLQ. Residues 120 to 142 traverse the membrane as a helical segment; it reads PAMAVIFSNFSIITTALLFRIVL. Residues 143-147 are Cytoplasmic-facing; sequence KRRLN. The chain crosses the membrane as a helical span at residues 148–168; it reads WIQWASLLTLFLSIVALTAGT. At 169 to 228 the chain is on the lumenal side; it reads KTLQHNLAGRGFHHDAFFSPSNSCLLFRSECPRKDNCTAKEWTFPEAKWNTTARVFSHIR. N-linked (GlcNAc...) asparagine glycosylation is present at Asn204. A helical membrane pass occupies residues 229 to 249; sequence LGMGHVLIIVQCFISSMANIY. The Cytoplasmic segment spans residues 250–263; the sequence is NEKILKEGNQLTES. A helical transmembrane segment spans residues 264 to 284; sequence IFIQNSKLYFFGILFNGLTLG. At 285–303 the chain is on the lumenal side; the sequence is LQRSNRDQIKNCGFFYGHS. The chain crosses the membrane as a helical span at residues 304-324; that stretch reads AFSVALIFVTAFQGLSVAFIL. Over 325–330 the chain is Cytoplasmic; the sequence is KFLDNM. Residues 331–351 traverse the membrane as a helical segment; that stretch reads FHVLMAQVTTVIITTVSVLVF. Residues 352-354 are Lumenal-facing; it reads DFR. A helical transmembrane segment spans residues 355–375; it reads PSLEFFLEAPSVLLSIFIYNA. Residues 376-424 are Cytoplasmic-facing; sequence SKPQVPEYAPRQERIRDLSGNLWERSSGDGEELERLTKPKSDESDEDTF. Ser394, Ser416, and Ser419 each carry phosphoserine. The disordered stretch occupies residues 397-424; that stretch reads LWERSSGDGEELERLTKPKSDESDEDTF. The span at 408–417 shows a compositional bias: basic and acidic residues; sequence LERLTKPKSD.

The protein belongs to the nucleotide-sugar transporter family. SLC35A subfamily. Probably forms homooligomers and heterooligomers with SLC35A1, SLC35A2, SLC35A3 and SLC35A4.

It localises to the golgi apparatus membrane. The enzyme catalyses UMP(out) + UDP-alpha-D-glucuronate(in) = UMP(in) + UDP-alpha-D-glucuronate(out). It carries out the reaction UMP(out) + UDP-N-acetyl-alpha-D-glucosamine(in) = UMP(in) + UDP-N-acetyl-alpha-D-glucosamine(out). The catalysed reaction is UDP-N-acetyl-alpha-D-galactosamine(in) + UMP(out) = UDP-N-acetyl-alpha-D-galactosamine(out) + UMP(in). Its function is as follows. Probable UDP-sugar:UMP transmembrane antiporter involved in UDP-alpha-D-glucuronate/UDP-GlcA, UDP-GlcNAc/UDP-N-acetyl-alpha-D-glucosamine and UDP-N-acetyl-alpha-D-galactosamine/UDP-GalNAc transport from the cytosol to the lumen of the Golgi. This is UDP-sugar transporter protein SLC35A5 from Homo sapiens (Human).